The chain runs to 444 residues: ATP-dependent protease ATPase subunit HslU (444 aa).

ATP contacts are provided by residues isoleucine 18, 60–65, aspartate 257, glutamate 322, and arginine 394; that span reads GVGKTE.

The protein belongs to the ClpX chaperone family. HslU subfamily. A double ring-shaped homohexamer of HslV is capped on each side by a ring-shaped HslU homohexamer. The assembly of the HslU/HslV complex is dependent on binding of ATP.

It is found in the cytoplasm. Functionally, ATPase subunit of a proteasome-like degradation complex; this subunit has chaperone activity. The binding of ATP and its subsequent hydrolysis by HslU are essential for unfolding of protein substrates subsequently hydrolyzed by HslV. HslU recognizes the N-terminal part of its protein substrates and unfolds these before they are guided to HslV for hydrolysis. The polypeptide is ATP-dependent protease ATPase subunit HslU (Psychromonas ingrahamii (strain DSM 17664 / CCUG 51855 / 37)).